Consider the following 496-residue polypeptide: L-arabinose isomerase (496 aa).

Glu-302, Glu-329, His-346, and His-445 together coordinate Mn(2+).

This sequence belongs to the arabinose isomerase family. It depends on Mn(2+) as a cofactor.

It catalyses the reaction beta-L-arabinopyranose = L-ribulose. It functions in the pathway carbohydrate degradation; L-arabinose degradation via L-ribulose; D-xylulose 5-phosphate from L-arabinose (bacterial route): step 1/3. Functionally, catalyzes the conversion of L-arabinose to L-ribulose. This is L-arabinose isomerase from Thermotoga petrophila (strain ATCC BAA-488 / DSM 13995 / JCM 10881 / RKU-1).